The sequence spans 251 residues: Cell division protein ZapD (251 aa).

It belongs to the ZapD family. In terms of assembly, interacts with FtsZ.

It localises to the cytoplasm. In terms of biological role, cell division factor that enhances FtsZ-ring assembly. Directly interacts with FtsZ and promotes bundling of FtsZ protofilaments, with a reduction in FtsZ GTPase activity. The polypeptide is Cell division protein ZapD (Paraburkholderia phytofirmans (strain DSM 17436 / LMG 22146 / PsJN) (Burkholderia phytofirmans)).